The chain runs to 561 residues: Putative periplasmic trehalase (561 aa).

The first 30 residues, 1-30 (MKSPAPSRPQKMALIPACIFLCFAALSVQA), serve as a signal peptide directing secretion. Substrate contacts are provided by residues arginine 148, 155–156 (WD), asparagine 192, 201–203 (RSQ), 273–275 (RPE), and glycine 306. Catalysis depends on proton donor/acceptor residues aspartate 308 and glutamate 492. Glutamate 507 serves as a coordination point for substrate. Positions 535–561 (CDNVPATRPLSESTTQPVKQKEAEPTP) are disordered.

The protein belongs to the glycosyl hydrolase 37 family. In terms of assembly, monomer.

The protein localises to the periplasm. The catalysed reaction is alpha,alpha-trehalose + H2O = alpha-D-glucose + beta-D-glucose. In terms of biological role, provides the cells with the ability to utilize trehalose at high osmolarity by splitting it into glucose molecules that can subsequently be taken up by the phosphotransferase-mediated uptake system. This is Putative periplasmic trehalase from Escherichia coli O157:H7.